Consider the following 173-residue polypeptide: Crossover junction endodeoxyribonuclease RuvC (173 aa).

Residues Asp-8, Glu-67, and Asp-139 contribute to the active site. Mg(2+)-binding residues include Asp-8, Glu-67, and Asp-139.

It belongs to the RuvC family. Homodimer which binds Holliday junction (HJ) DNA. The HJ becomes 2-fold symmetrical on binding to RuvC with unstacked arms; it has a different conformation from HJ DNA in complex with RuvA. In the full resolvosome a probable DNA-RuvA(4)-RuvB(12)-RuvC(2) complex forms which resolves the HJ. It depends on Mg(2+) as a cofactor.

It is found in the cytoplasm. It catalyses the reaction Endonucleolytic cleavage at a junction such as a reciprocal single-stranded crossover between two homologous DNA duplexes (Holliday junction).. Its function is as follows. The RuvA-RuvB-RuvC complex processes Holliday junction (HJ) DNA during genetic recombination and DNA repair. Endonuclease that resolves HJ intermediates. Cleaves cruciform DNA by making single-stranded nicks across the HJ at symmetrical positions within the homologous arms, yielding a 5'-phosphate and a 3'-hydroxyl group; requires a central core of homology in the junction. The consensus cleavage sequence is 5'-(A/T)TT(C/G)-3'. Cleavage occurs on the 3'-side of the TT dinucleotide at the point of strand exchange. HJ branch migration catalyzed by RuvA-RuvB allows RuvC to scan DNA until it finds its consensus sequence, where it cleaves and resolves the cruciform DNA. This Shewanella oneidensis (strain ATCC 700550 / JCM 31522 / CIP 106686 / LMG 19005 / NCIMB 14063 / MR-1) protein is Crossover junction endodeoxyribonuclease RuvC.